A 299-amino-acid chain; its full sequence is N-acetylmuramic acid 6-phosphate etherase (299 aa).

The SIS domain maps to 57-220 (ISAAFHKKGR…TTGAMIRTGK (164 aa)). Glu85 (proton donor) is an active-site residue. The active site involves Glu116.

The protein belongs to the GCKR-like family. MurNAc-6-P etherase subfamily. As to quaternary structure, homodimer.

It catalyses the reaction N-acetyl-D-muramate 6-phosphate + H2O = N-acetyl-D-glucosamine 6-phosphate + (R)-lactate. It participates in amino-sugar metabolism; 1,6-anhydro-N-acetylmuramate degradation. The protein operates within amino-sugar metabolism; N-acetylmuramate degradation. It functions in the pathway cell wall biogenesis; peptidoglycan recycling. Its function is as follows. Specifically catalyzes the cleavage of the D-lactyl ether substituent of MurNAc 6-phosphate, producing GlcNAc 6-phosphate and D-lactate. Together with AnmK, is also required for the utilization of anhydro-N-acetylmuramic acid (anhMurNAc) either imported from the medium or derived from its own cell wall murein, and thus plays a role in cell wall recycling. This chain is N-acetylmuramic acid 6-phosphate etherase, found in Psychromonas ingrahamii (strain DSM 17664 / CCUG 51855 / 37).